The chain runs to 162 residues: ATP synthase subunit b (162 aa).

Residues 10-29 (LIWTIINFAVLLWGMHRFLY) form a helical membrane-spanning segment.

It belongs to the ATPase B chain family. In terms of assembly, F-type ATPases have 2 components, F(1) - the catalytic core - and F(0) - the membrane proton channel. F(1) has five subunits: alpha(3), beta(3), gamma(1), delta(1), epsilon(1). F(0) has three main subunits: a(1), b(2) and c(10-14). The alpha and beta chains form an alternating ring which encloses part of the gamma chain. F(1) is attached to F(0) by a central stalk formed by the gamma and epsilon chains, while a peripheral stalk is formed by the delta and b chains.

It localises to the cell membrane. In terms of biological role, f(1)F(0) ATP synthase produces ATP from ADP in the presence of a proton or sodium gradient. F-type ATPases consist of two structural domains, F(1) containing the extramembraneous catalytic core and F(0) containing the membrane proton channel, linked together by a central stalk and a peripheral stalk. During catalysis, ATP synthesis in the catalytic domain of F(1) is coupled via a rotary mechanism of the central stalk subunits to proton translocation. Its function is as follows. Component of the F(0) channel, it forms part of the peripheral stalk, linking F(1) to F(0). This is ATP synthase subunit b from Symbiobacterium thermophilum (strain DSM 24528 / JCM 14929 / IAM 14863 / T).